We begin with the raw amino-acid sequence, 191 residues long: Adenylate kinase (191 aa).

9 to 17 contacts ATP; it reads GVPGVGATT.

This sequence belongs to the archaeal adenylate kinase family.

Its subcellular location is the cytoplasm. The catalysed reaction is AMP + ATP = 2 ADP. The protein is Adenylate kinase of Methanopyrus kandleri (strain AV19 / DSM 6324 / JCM 9639 / NBRC 100938).